Reading from the N-terminus, the 191-residue chain is Fe/S biogenesis protein NfuA (191 aa).

[4Fe-4S] cluster contacts are provided by cysteine 149 and cysteine 152.

It belongs to the NfuA family. In terms of assembly, homodimer. [4Fe-4S] cluster is required as a cofactor.

Its function is as follows. Involved in iron-sulfur cluster biogenesis. Binds a 4Fe-4S cluster, can transfer this cluster to apoproteins, and thereby intervenes in the maturation of Fe/S proteins. Could also act as a scaffold/chaperone for damaged Fe/S proteins. This is Fe/S biogenesis protein NfuA from Sodalis glossinidius (strain morsitans).